Consider the following 148-residue polypeptide: Lysozyme-like protein 2 (148 aa).

The N-terminal stretch at 1–19 (MKAAGILTLIGCLVTGAES) is a signal peptide. The 129-residue stretch at 20-148 (KIYTRCKLAK…SDWKKDCEVS (129 aa)) folds into the C-type lysozyme domain. Intrachain disulfides connect Cys-25-Cys-145, Cys-49-Cys-133, Cys-83-Cys-98, and Cys-94-Cys-112. Residue Glu-54 is part of the active site. N-linked (GlcNAc...) asparagine glycosylation occurs at Asn-58. Asp-71 is an active-site residue.

The protein belongs to the glycosyl hydrolase 22 family. As to quaternary structure, monomer. In terms of tissue distribution, expressed in testis, epididymis and placenta.

Its subcellular location is the secreted. It catalyses the reaction Hydrolysis of (1-&gt;4)-beta-linkages between N-acetylmuramic acid and N-acetyl-D-glucosamine residues in a peptidoglycan and between N-acetyl-D-glucosamine residues in chitodextrins.. In Homo sapiens (Human), this protein is Lysozyme-like protein 2 (LYZL2).